Reading from the N-terminus, the 210-residue chain is MYDFEPKMNALVPMVIEQTNRGERGYDIYSRLLKERIIFLIGGVNDAVASLICSQLLFLESENPSKDIALYINSPGGYVSAGLAIYDTMQYIRPQVSTVCMGQAASMGSLLLAAGAPGKRFSLPNSRIMIHQPSGGAQGQASDIEIQAQEILKLRSRLNDIYVKHTGQSLDTIEAXMERDKFMSPEEAKAFGLIDEVVEKRPGSIGDGAA.

Ser106 (nucleophile) is an active-site residue. His131 is a catalytic residue.

The protein belongs to the peptidase S14 family. As to quaternary structure, fourteen ClpP subunits assemble into 2 heptameric rings which stack back to back to give a disk-like structure with a central cavity, resembling the structure of eukaryotic proteasomes.

Its subcellular location is the cytoplasm. It carries out the reaction Hydrolysis of proteins to small peptides in the presence of ATP and magnesium. alpha-casein is the usual test substrate. In the absence of ATP, only oligopeptides shorter than five residues are hydrolyzed (such as succinyl-Leu-Tyr-|-NHMec, and Leu-Tyr-Leu-|-Tyr-Trp, in which cleavage of the -Tyr-|-Leu- and -Tyr-|-Trp bonds also occurs).. Its function is as follows. Cleaves peptides in various proteins in a process that requires ATP hydrolysis. Has a chymotrypsin-like activity. Plays a major role in the degradation of misfolded proteins. This Azospirillum brasilense protein is ATP-dependent Clp protease proteolytic subunit.